A 143-amino-acid chain; its full sequence is Endoribonuclease YbeY (143 aa).

Residues H109, H113, and D119 each coordinate Zn(2+).

The protein belongs to the endoribonuclease YbeY family. Zn(2+) is required as a cofactor.

The protein localises to the cytoplasm. In terms of biological role, single strand-specific metallo-endoribonuclease involved in late-stage 70S ribosome quality control and in maturation of the 3' terminus of the 16S rRNA. This chain is Endoribonuclease YbeY, found in Christiangramia forsetii (strain DSM 17595 / CGMCC 1.15422 / KT0803) (Gramella forsetii).